We begin with the raw amino-acid sequence, 597 residues long: Elongation factor 4 (597 aa).

Positions 2–184 constitute a tr-type G domain; sequence KNIRNFSIIA…TVVQKIPAPK (183 aa). GTP is bound by residues 14 to 19 and 131 to 134; these read DHGKST and NKID.

The protein belongs to the TRAFAC class translation factor GTPase superfamily. Classic translation factor GTPase family. LepA subfamily.

The protein localises to the cell inner membrane. The enzyme catalyses GTP + H2O = GDP + phosphate + H(+). Functionally, required for accurate and efficient protein synthesis under certain stress conditions. May act as a fidelity factor of the translation reaction, by catalyzing a one-codon backward translocation of tRNAs on improperly translocated ribosomes. Back-translocation proceeds from a post-translocation (POST) complex to a pre-translocation (PRE) complex, thus giving elongation factor G a second chance to translocate the tRNAs correctly. Binds to ribosomes in a GTP-dependent manner. In Laribacter hongkongensis (strain HLHK9), this protein is Elongation factor 4.